A 383-amino-acid polypeptide reads, in one-letter code: Trichodiene synthase (383 aa).

This sequence belongs to the trichodiene synthase family.

It carries out the reaction (2E,6E)-farnesyl diphosphate = trichodiene + diphosphate. The protein operates within sesquiterpene biosynthesis; trichothecene biosynthesis. Its function is as follows. TS is a member of the terpene cyclase group of enzymes. It catalyzes the isomerization and cyclization of farnesyl pyro-phosphate to form trichodiene, the first cyclic intermediate in the biosynthetic pathway for trichothecenes. It serves to branch trichothecene biosynthesis from the isoprenoid pathway. This is Trichodiene synthase (TRI5) from Gibberella pulicaris.